The following is a 293-amino-acid chain: Small ribosomal subunit protein uS2m (293 aa).

Low complexity predominate over residues G21–A38. 2 disordered regions span residues G21 to A49 and Q263 to P293. Positions R39–A49 are enriched in basic and acidic residues. Residues G267 to P279 show a composition bias toward pro residues.

It belongs to the universal ribosomal protein uS2 family. In terms of assembly, component of the mitochondrial ribosome small subunit (28S) which comprises a 12S rRNA and about 30 distinct proteins.

It is found in the mitochondrion. Its function is as follows. Required for mitoribosome formation and stability, and mitochondrial translation. This is Small ribosomal subunit protein uS2m (MRPS2) from Bos taurus (Bovine).